The sequence spans 606 residues: Transmembrane 9 superfamily member 1 (606 aa).

Positions 1–27 are cleaved as a signal peptide; that stretch reads MTVVGNPRSWSCRWLPILILLLGTGHG. The N-linked (GlcNAc...) asparagine glycan is linked to Asn178. 4 helical membrane-spanning segments follow: residues 237 to 257, 310 to 330, 339 to 359, and 373 to 393; these read LSII…AVIL, VLGV…MALL, GAIN…SGYV, and VWNI…TWSV. Asn401 is a glycosylation site (N-linked (GlcNAc...) asparagine). 4 helical membrane-spanning segments follow: residues 412 to 432, 469 to 489, 499 to 519, and 535 to 555; these read ILLL…IGGI, VGGF…FATV, GILF…SIAL, and SVLS…FYYA. Asn559 carries N-linked (GlcNAc...) asparagine glycosylation. A helical membrane pass occupies residues 570-590; that stretch reads FGYSLLTGYVFFLMLGTISFF.

Belongs to the nonaspanin (TM9SF) (TC 9.A.2) family.

It is found in the lysosome membrane. It localises to the cytoplasmic vesicle. Its subcellular location is the autophagosome membrane. Plays an essential role in autophagy. The chain is Transmembrane 9 superfamily member 1 (TM9SF1) from Pongo abelii (Sumatran orangutan).